We begin with the raw amino-acid sequence, 56 residues long: Large ribosomal subunit protein eL37 (56 aa).

4 residues coordinate Zn(2+): cysteine 19, cysteine 22, cysteine 34, and cysteine 37. A C4-type zinc finger spans residues 19–37 (CRRCGSVSLNIHTKQCTSC).

The protein belongs to the eukaryotic ribosomal protein eL37 family. It depends on Zn(2+) as a cofactor.

Its function is as follows. Binds to the 23S rRNA. This is Large ribosomal subunit protein eL37 from Methanococcoides burtonii (strain DSM 6242 / NBRC 107633 / OCM 468 / ACE-M).